The chain runs to 417 residues: Adrenocortical dysplasia protein homolog (417 aa).

The short motif at 11–13 (PWI) is the PWI element. Position 25 is a phosphoserine (serine 25). Residues 156 to 245 (ESASSSAGLT…SSIDSSQKAQ (90 aa)) form an interaction with POT1 region. Composition is skewed to polar residues over residues 237-250 (SIDSSQKAQENPAS) and 259-292 (SGASVSLLSALPTSDPGQKDNSQPPPTVCSTSPR). Residues 237-309 (SIDSSQKAQE…PCSSTPSSPL (73 aa)) form a disordered region. Positions 296 to 309 (PSSTPCSSTPSSPL) are enriched in low complexity. Serine 313 and serine 317 each carry phosphoserine. Residue lysine 348 forms a Glycyl lysine isopeptide (Lys-Gly) (interchain with G-Cter in SUMO2) linkage.

Component of the shelterin complex (telosome) composed of TERF1, TERF2, TINF2, TERF2IP ACD and POT1. Forms heterodimers with POT1. Identified in a complex with POT1 and single-stranded telomeric DNA. Interacts with STN1 and TINF2.

Its subcellular location is the nucleus. It is found in the chromosome. The protein resides in the telomere. Functionally, component of the shelterin complex (telosome) that is involved in the regulation of telomere length and protection. Shelterin associates with arrays of double-stranded TTAGGG repeats added by telomerase and protects chromosome ends. Without its protective activity, telomeres are no longer hidden from the DNA damage surveillance and chromosome ends are inappropriately processed by DNA repair pathways. Promotes binding of POT1 to single-stranded telomeric DNA. Modulates the inhibitory effects of POT1 on telomere elongation. The ACD-POT1 heterodimer enhances telomere elongation by recruiting telomerase to telomeres and increasing its processivity. May play a role in organogenesis. The protein is Adrenocortical dysplasia protein homolog of Rattus norvegicus (Rat).